Here is a 185-residue protein sequence, read N- to C-terminus: Large ribosomal subunit protein uL5c (185 aa).

Belongs to the universal ribosomal protein uL5 family. As to quaternary structure, part of the 50S ribosomal subunit; contacts the 5S rRNA.

The protein resides in the plastid. The protein localises to the chloroplast. Binds 5S rRNA, forms part of the central protuberance of the 50S subunit. The protein is Large ribosomal subunit protein uL5c (rpl5) of Chlorokybus atmophyticus (Soil alga).